A 392-amino-acid polypeptide reads, in one-letter code: Speckle-type POZ protein-like (392 aa).

The MATH domain maps to 31-161 (KFSYMWTINN…DDKLTLFCEV (131 aa)). The BTB domain maps to 200–267 (TDCCFFVRGK…VYTGKAPNLD (68 aa)).

Belongs to the Tdpoz family. As to quaternary structure, homodimer. Heterodimer with SPOP. Component of cullin-RING-based BCR (BTB-CUL3-RBX1) E3 ubiquitin-protein ligase complexes containing homodimeric SPOPL or the heterodimer formed by SPOP and SPOPL. Interacts with CUL3 and MACROH2A1.

The protein localises to the nucleus. It participates in protein modification; protein ubiquitination. Component of a cullin-RING-based BCR (BTB-CUL3-RBX1) E3 ubiquitin-protein ligase complex that mediates the ubiquitination and subsequent proteasomal degradation of target proteins, but with relatively low efficiency. Cullin-RING-based BCR (BTB-CUL3-RBX1) E3 ubiquitin-protein ligase complexes containing homodimeric SPOPL or the heterodimer formed by SPOP and SPOPL are less efficient than ubiquitin ligase complexes containing only SPOP. May function to down-regulate the activity of cullin-RING-based BCR (BTB-CUL3-RBX1) E3 ubiquitin-protein ligase complexes that contain SPOP. The polypeptide is Speckle-type POZ protein-like (Spopl) (Mus musculus (Mouse)).